Consider the following 184-residue polypeptide: dCTP deaminase (184 aa).

Position 107–112 (107–112) interacts with dCTP; the sequence is KSTIAR. Glutamate 133 acts as the Proton donor/acceptor in catalysis. Residues glutamine 152, tyrosine 166, and glutamine 176 each coordinate dCTP.

This sequence belongs to the dCTP deaminase family. Homotrimer.

The catalysed reaction is dCTP + H2O + H(+) = dUTP + NH4(+). Its pathway is pyrimidine metabolism; dUMP biosynthesis; dUMP from dCTP (dUTP route): step 1/2. Functionally, catalyzes the deamination of dCTP to dUTP. This chain is dCTP deaminase, found in Roseiflexus castenholzii (strain DSM 13941 / HLO8).